Reading from the N-terminus, the 275-residue chain is Trans-aconitate 2-methyltransferase (275 aa).

It belongs to the methyltransferase superfamily. Tam family.

The protein resides in the cytoplasm. The catalysed reaction is trans-aconitate + S-adenosyl-L-methionine = (E)-3-(methoxycarbonyl)pent-2-enedioate + S-adenosyl-L-homocysteine. Its function is as follows. Catalyzes the S-adenosylmethionine monomethyl esterification of trans-aconitate. The chain is Trans-aconitate 2-methyltransferase from Pseudomonas aeruginosa (strain ATCC 15692 / DSM 22644 / CIP 104116 / JCM 14847 / LMG 12228 / 1C / PRS 101 / PAO1).